Reading from the N-terminus, the 189-residue chain is Interferon alpha-5 (189 aa).

The first 21 residues, 1-21 (MALPFVLLMALVVLNCKSICS), serve as a signal peptide directing secretion. 2 cysteine pairs are disulfide-bonded: C24–C122 and C52–C162.

The protein belongs to the alpha/beta interferon family.

It is found in the secreted. Functionally, produced by macrophages, IFN-alpha have antiviral activities. Interferon stimulates the production of two enzymes: a protein kinase and an oligoadenylate synthetase. The chain is Interferon alpha-5 (IFNA5) from Homo sapiens (Human).